A 228-amino-acid chain; its full sequence is Ras-related protein Rab-33B (228 aa).

Positions 41, 42, 43, 44, 45, 46, 60, and 63 each coordinate GTP. Thr-45 contacts Mg(2+). A Switch 1 motif is present at residues 54-66 (GRFPQRTEATIGV). Mg(2+) is bound by residues Thr-63 and Asp-86. Positions 87-106 (TAGQERFRKSMVQHYYRNVH) match the Switch 2 motif. GTP contacts are provided by Gly-89, Asn-146, Lys-147, Asp-149, Ala-177, and Lys-178. 2 S-geranylgeranyl cysteine lipidation sites follow: Cys-226 and Cys-228. Cysteine methyl ester is present on Cys-228.

This sequence belongs to the small GTPase superfamily. Rab family. Interacts (GTP- and GDP-bound forms) with ATG16L1; the complex consists of a tetramer where two RAB33B molecules bind independently one molecule of the ATG16L1 homodimer; the interaction promotes ATG12-ATG5-ATG16L1 complex recruitment to phagophores. Interacts with ATG16L2; however interaction is approximately hundred times lower than for ATG16L1. Interacts with RIC1 (via C-terminus domain); the interaction is direct with a preference for RAB33B-GTP. Interacts with RGP1. The cofactor is Mg(2+).

It localises to the golgi apparatus membrane. The protein resides in the golgi apparatus. The protein localises to the cis-Golgi network. Its subcellular location is the preautophagosomal structure membrane. The enzyme catalyses GTP + H2O = GDP + phosphate + H(+). Regulated by guanine nucleotide exchange factors (GEFs) which promote the exchange of bound GDP for free GTP. Regulated by GTPase activating proteins (GAPs) such as SGSM2 which increase the GTP hydrolysis activity. Inhibited by GDP dissociation inhibitors (GDIs). In terms of biological role, the small GTPases Rab are key regulators of intracellular membrane trafficking, from the formation of transport vesicles to their fusion with membranes. Rabs cycle between an inactive GDP-bound form and an active GTP-bound form that is able to recruit to membranes different sets of downstream effectors directly responsible for vesicle formation, movement, tethering and fusion. RAB33B acts, in coordination with RAB6A, to regulate intra-Golgi retrograde trafficking. Participates in autophagosome formation by recruiting the ATG12-ATG5-ATG16L1 complex to phagophores, probably in a nucleotide-independent manner. This Gallus gallus (Chicken) protein is Ras-related protein Rab-33B (RAB33B).